Here is a 419-residue protein sequence, read N- to C-terminus: Creatine kinase S-type, mitochondrial (419 aa).

A mitochondrion-targeting transit peptide spans methionine 1–alanine 39. The tract at residues glutamate 40 to methionine 64 is cardiolipin-binding. In terms of domain architecture, Phosphagen kinase N-terminal spans lysine 46 to asparagine 132. The Phosphagen kinase C-terminal domain occupies tyrosine 159 to leucine 401. ATP is bound by residues serine 162–arginine 166 and histidine 225. Tyrosine 255 carries the post-translational modification Phosphotyrosine. ATP-binding positions include arginine 270, arginine 326, arginine 354–valine 359, and aspartate 369. Position 356 is a phosphothreonine (threonine 356).

The protein belongs to the ATP:guanido phosphotransferase family. Exists as an octamer composed of four CKMT2 homodimers.

It is found in the mitochondrion inner membrane. It carries out the reaction creatine + ATP = N-phosphocreatine + ADP + H(+). Functionally, reversibly catalyzes the transfer of phosphate between ATP and various phosphogens (e.g. creatine phosphate). Creatine kinase isoenzymes play a central role in energy transduction in tissues with large, fluctuating energy demands, such as skeletal muscle, heart, brain and spermatozoa. This chain is Creatine kinase S-type, mitochondrial (CKMT2), found in Oryctolagus cuniculus (Rabbit).